Reading from the N-terminus, the 622-residue chain is Low affinity potassium transport system protein Kup (622 aa).

The next 12 helical transmembrane spans lie at 9-29, 49-69, 101-121, 137-157, 165-185, 212-232, 247-267, 276-296, 337-357, 363-383, 397-417, and 419-439; these read LPAV…TSPL, VFGF…LKYL, VLVI…VITP, PAMD…LFII, VGKL…VLGV, AVSF…EALY, WFTV…ALLL, PFFL…ATLA, IYIP…IVSF, LAAA…ILFC, AWVL…ANVV, and ILSG…IMTT.

Belongs to the HAK/KUP transporter (TC 2.A.72) family.

The protein localises to the cell inner membrane. It carries out the reaction K(+)(in) + H(+)(in) = K(+)(out) + H(+)(out). Functionally, responsible for the low-affinity transport of potassium into the cell. Likely operates as a K(+):H(+) symporter. In Pectobacterium atrosepticum (strain SCRI 1043 / ATCC BAA-672) (Erwinia carotovora subsp. atroseptica), this protein is Low affinity potassium transport system protein Kup.